Reading from the N-terminus, the 341-residue chain is Flap endonuclease 1 (341 aa).

Residues 1–98 are N-domain; sequence MGVQIGELIP…RELEKRREAR (98 aa). The Mg(2+) site is built by aspartate 27, aspartate 80, glutamate 152, glutamate 154, aspartate 173, aspartate 175, and aspartate 236. The tract at residues 116–258 is I-domain; it reads EAKKYAMRAT…KALTIVKRTK (143 aa). The tract at residues 330 to 338 is interaction with PCNA; the sequence is KQSTLESWF.

The protein belongs to the XPG/RAD2 endonuclease family. FEN1 subfamily. In terms of assembly, interacts with PCNA. PCNA stimulates the nuclease activity without altering cleavage specificity. Mg(2+) serves as cofactor.

Functionally, structure-specific nuclease with 5'-flap endonuclease and 5'-3' exonuclease activities involved in DNA replication and repair. During DNA replication, cleaves the 5'-overhanging flap structure that is generated by displacement synthesis when DNA polymerase encounters the 5'-end of a downstream Okazaki fragment. Binds the unpaired 3'-DNA end and kinks the DNA to facilitate 5' cleavage specificity. Cleaves one nucleotide into the double-stranded DNA from the junction in flap DNA, leaving a nick for ligation. Also involved in the base excision repair (BER) pathway. Acts as a genome stabilization factor that prevents flaps from equilibrating into structures that lead to duplications and deletions. Also possesses 5'-3' exonuclease activity on nicked or gapped double-stranded DNA. This Thermococcus onnurineus (strain NA1) protein is Flap endonuclease 1.